Here is a 239-residue protein sequence, read N- to C-terminus: Large ribosomal subunit protein uL3 (239 aa).

Disordered regions lie at residues 140–164 (SHRSIGSTGGRQDPGKTWKNKKMPG) and 211–239 (PLPKEAPKPGKFKVAGEQAAEAPAMQEGA). The residue at position 151 (Gln151) is an N5-methylglutamine.

The protein belongs to the universal ribosomal protein uL3 family. As to quaternary structure, part of the 50S ribosomal subunit. Forms a cluster with proteins L14 and L19. Post-translationally, methylated by PrmB.

Functionally, one of the primary rRNA binding proteins, it binds directly near the 3'-end of the 23S rRNA, where it nucleates assembly of the 50S subunit. This chain is Large ribosomal subunit protein uL3, found in Bradyrhizobium sp. (strain ORS 278).